A 206-amino-acid polypeptide reads, in one-letter code: Putative archaetidylserine decarboxylase proenzyme (206 aa).

Ser172 acts as the Schiff-base intermediate with substrate; via pyruvic acid in catalysis. Ser172 is modified (pyruvic acid (Ser); by autocatalysis).

Belongs to the phosphatidylserine decarboxylase family. PSD-A subfamily. Heterodimer of a large membrane-associated beta subunit and a small pyruvoyl-containing alpha subunit. Pyruvate is required as a cofactor. Is synthesized initially as an inactive proenzyme. Formation of the active enzyme involves a self-maturation process in which the active site pyruvoyl group is generated from an internal serine residue via an autocatalytic post-translational modification. Two non-identical subunits are generated from the proenzyme in this reaction, and the pyruvate is formed at the N-terminus of the alpha chain, which is derived from the carboxyl end of the proenzyme. The post-translation cleavage follows an unusual pathway, termed non-hydrolytic serinolysis, in which the side chain hydroxyl group of the serine supplies its oxygen atom to form the C-terminus of the beta chain, while the remainder of the serine residue undergoes an oxidative deamination to produce ammonia and the pyruvoyl prosthetic group on the alpha chain.

It is found in the cell membrane. It catalyses the reaction archaetidylserine + H(+) = archaetidylethanolamine + CO2. Functionally, catalyzes the formation of archaetidylethanolamine (PtdEtn) from archaetidylserine (PtdSer). This is Putative archaetidylserine decarboxylase proenzyme from Methanocaldococcus jannaschii (strain ATCC 43067 / DSM 2661 / JAL-1 / JCM 10045 / NBRC 100440) (Methanococcus jannaschii).